We begin with the raw amino-acid sequence, 338 residues long: Aspartate carbamoyltransferase catalytic subunit (338 aa).

The carbamoyl phosphate site is built by Arg-59 and Thr-60. Lys-87 contributes to the L-aspartate binding site. Carbamoyl phosphate-binding residues include Arg-109, His-142, and Gln-145. Residues Arg-182 and Arg-253 each coordinate L-aspartate. Positions 294 and 295 each coordinate carbamoyl phosphate.

Belongs to the aspartate/ornithine carbamoyltransferase superfamily. ATCase family. Heterododecamer (2C3:3R2) of six catalytic PyrB chains organized as two trimers (C3), and six regulatory PyrI chains organized as three dimers (R2).

It catalyses the reaction carbamoyl phosphate + L-aspartate = N-carbamoyl-L-aspartate + phosphate + H(+). Its pathway is pyrimidine metabolism; UMP biosynthesis via de novo pathway; (S)-dihydroorotate from bicarbonate: step 2/3. Its function is as follows. Catalyzes the condensation of carbamoyl phosphate and aspartate to form carbamoyl aspartate and inorganic phosphate, the committed step in the de novo pyrimidine nucleotide biosynthesis pathway. The chain is Aspartate carbamoyltransferase catalytic subunit from Prochlorococcus marinus subsp. pastoris (strain CCMP1986 / NIES-2087 / MED4).